Consider the following 381-residue polypeptide: Chaperone protein DnaJ (381 aa).

The region spanning 5–73 is the J domain; that stretch reads DYYEVLGVGK…EKKAAYDQYG (69 aa). Residues 141-219 form a CR-type zinc finger; it reads GHEAQIRVPH…CHGQGKLKSQ (79 aa). Residues C154, C157, C171, C174, C193, C196, C207, and C210 each coordinate Zn(2+). CXXCXGXG motif repeat units lie at residues 154-161, 171-178, 193-200, and 207-214; these read CDHCHGNG, CPTCHGAG, CPKCHGSG, and CTKCHGQG. The tract at residues 357-381 is disordered; that stretch reads SVHEGGSRHSPQEQSWLDKVKSFFS.

This sequence belongs to the DnaJ family. Homodimer. Zn(2+) is required as a cofactor.

The protein resides in the cytoplasm. Its function is as follows. Participates actively in the response to hyperosmotic and heat shock by preventing the aggregation of stress-denatured proteins and by disaggregating proteins, also in an autonomous, DnaK-independent fashion. Unfolded proteins bind initially to DnaJ; upon interaction with the DnaJ-bound protein, DnaK hydrolyzes its bound ATP, resulting in the formation of a stable complex. GrpE releases ADP from DnaK; ATP binding to DnaK triggers the release of the substrate protein, thus completing the reaction cycle. Several rounds of ATP-dependent interactions between DnaJ, DnaK and GrpE are required for fully efficient folding. Also involved, together with DnaK and GrpE, in the DNA replication of plasmids through activation of initiation proteins. The chain is Chaperone protein DnaJ from Cupriavidus necator (strain ATCC 17699 / DSM 428 / KCTC 22496 / NCIMB 10442 / H16 / Stanier 337) (Ralstonia eutropha).